Reading from the N-terminus, the 1282-residue chain is Protein PIR (1282 aa).

In terms of assembly, binds NAP1 and ROP2, but not ROP8. As to expression, expressed in roots, root hairs, hypocotyls, cotyledons, stems, leaves, trichomes and flowers.

Its function is as follows. Involved in regulation of actin and microtubule organization. Part of a WAVE complex that activates the ARP2/3 complex. Interacts with the active form of RHO-family GTPases. This chain is Protein PIR (PIR), found in Arabidopsis thaliana (Mouse-ear cress).